The sequence spans 1481 residues: Cystic fibrosis transmembrane conductance regulator (1481 aa).

At 1–77 (MQRSPLEKAS…KLINALRRCF (77 aa)) the chain is on the cytoplasmic side. The chain crosses the membrane as a helical span at residues 78-98 (FWRFMFYGIILYLGEVTKAVQ). The 285-residue stretch at 81 to 365 (FMFYGIILYL…WAVQTWYDSL (285 aa)) folds into the ABC transmembrane type-1 1 domain. Over 99 to 122 (PLLLGRIIASYDPDNEAERSIAIY) the chain is Extracellular. A helical transmembrane segment spans residues 123–146 (LGIGLCLLFIVRTLLLHPAIFGLH). The Cytoplasmic portion of the chain corresponds to 147–195 (HIGMQMRIAMFSLIYKKTLKLSSRVLDKISIGQLVSLLSNNLNKFDEGL). The helical transmembrane segment at 196 to 216 (ALAHFVWIAPLQVTLLMGLLW) threads the bilayer. The Extracellular portion of the chain corresponds to 217–222 (DLLQAS). Residues 223–243 (AFCGLAFLIVLALFQAGLGRM) form a helical membrane-spanning segment. Residues 244 to 298 (MMKYRDQRAGKINERLVITSEMIENIQSVKAYCWEEAMEKMIENLRQTELKLTRK) lie on the Cytoplasmic side of the membrane. A helical transmembrane segment spans residues 299 to 319 (AAYVRYFNSSAFFFSGFFVVF). Residues 320-339 (LSVLPYALIKGIVLRRIFTT) are Extracellular-facing. A helical membrane pass occupies residues 340 to 358 (ISFCIVLRMAVTRQFPWAV). The Cytoplasmic portion of the chain corresponds to 359–858 (QTWYDSLGAI…YLRYITIHKS (500 aa)). ATP contacts are provided by residues Trp401, Ser433, 457-464 (GSTGAGKT), and Gln492. The ABC transporter 1 domain occupies 422 to 645 (NGDNSLFFSN…RPDFSSKLMG (224 aa)). Cys523 carries the S-palmitoyl cysteine lipid modification. Residues Ser548 and Ser659 each carry the phosphoserine modification. Residues 653 to 831 (SAERRNSILT…EEINEDDLKE (179 aa)) form a disordered R region region. Position 669 is a phosphoserine; by PKA (Ser669). Ser685 carries the phosphoserine modification. Lys687 is covalently cross-linked (Glycyl lysine isopeptide (Lys-Gly) (interchain with G-Cter in ubiquitin)). 2 positions are modified to phosphoserine: Ser699 and Ser711. Phosphothreonine is present on Thr716. 5 positions are modified to phosphoserine: Ser736, Ser767, Ser790, Ser795, and Ser813. The chain crosses the membrane as a helical span at residues 859–879 (LIFVLIWCLVIFLAEVAASLV). The ABC transmembrane type-1 2 domain maps to 859–1155 (LIFVLIWCLV…AVNSSIDVDS (297 aa)). Over 880–918 (VLWLLKETPPQDSGNSTKGANNSYAVIITSTSSYYVFYI) the chain is Extracellular. Residues Asn894 and Asn900 are each glycosylated (N-linked (GlcNAc...) asparagine). Residues 919–939 (YVGVADTLLALGLFRGLPLVH) form a discontinuously helical membrane-spanning segment. The Cytoplasmic portion of the chain corresponds to 940–990 (TLITVSKILHHKMLHSVLQAPMSTLNTLKAGGILNRFSKDMAILDDLLPLT). Residues 991 to 1011 (IFDFIQLLLIVIGAVAVVSVL) form a helical membrane-spanning segment. At 1012 to 1013 (QP) the chain is on the extracellular side. A helical membrane pass occupies residues 1014 to 1034 (YIFLATVPVIAAFIILRAYFL). The Cytoplasmic segment spans residues 1035-1095 (HTSQQLKQLE…TANWFLYLST (61 aa)). The helical transmembrane segment at 1096 to 1116 (LRWFQMRIEMIFVIFFIAVTF) threads the bilayer. The Extracellular portion of the chain corresponds to 1117–1130 (ISILTTGEGEGTVG). The helical transmembrane segment at 1131 to 1151 (IILTLAMNIMSTLQWAVNSSI) threads the bilayer. Topologically, residues 1152-1481 (DVDSLMRSVS…TEEEVQETRL (330 aa)) are cytoplasmic. The region spanning 1211 to 1444 (MTVKDLTAKY…KSLFQQAISS (234 aa)) is the ABC transporter 2 domain. Residues Tyr1220 and 1245–1252 (GRTGSGKS) contribute to the ATP site. The interaction with GORASP2 stretch occupies residues 1387–1481 (RTLKQAFADC…TEEEVQETRL (95 aa)). A lipid anchor (S-palmitoyl cysteine) is attached at Cys1396. 2 positions are modified to phosphoserine: Ser1445 and Ser1457. The tract at residues 1449–1481 (KLFPHRNSSKHKSRSKIAALQEETEEEVQETRL) is disordered. Residues 1451-1463 (FPHRNSSKHKSRS) show a composition bias toward basic residues. Over residues 1470-1481 (EETEEEVQETRL) the composition is skewed to acidic residues. The PDZ-binding motif lies at 1479–1481 (TRL).

Belongs to the ABC transporter superfamily. ABCC family. CFTR transporter (TC 3.A.1.202) subfamily. In terms of assembly, monomer; does not require oligomerization for channel activity. May form oligomers in the membrane. Interacts with SLC26A3, SLC26A6 and NHERF1. Interacts with SHANK2. Interacts with MYO6. Interacts (via C-terminus) with GOPC (via PDZ domain); this promotes CFTR internalization and thereby decreases channel activity. Interacts with SLC4A7 through NHERF1. Found in a complex with MYO5B and RAB11A. Interacts with ANO1. Interacts with SLC26A8. Interacts with AHCYL1; the interaction increases CFTR activity. Interacts with CSE1L. The core-glycosylated form interacts with GORASP2 (via PDZ GRASP-type 1 domain) in respone to ER stress. Interacts with MARCHF2; the interaction leads to CFTR ubiqtuitination and degradation. Interacts with ADGRG2. In terms of processing, N-glycosylated. Post-translationally, phosphorylated; cAMP treatment promotes phosphorylation and activates the channel. Dephosphorylation decreases the ATPase activity (in vitro). Phosphorylation at PKA sites activates the channel. Phosphorylation at PKC sites enhances the response to phosphorylation by PKA. Phosphorylated by AMPK; this inhibits channel activity. Ubiquitinated, leading to its degradation in the lysosome. Deubiquitination by USP10 in early endosomes enhances its endocytic recycling to the cell membrane. Ubiquitinated by RNF185 during ER stress. Ubiquitinated by MARCHF2.

It localises to the apical cell membrane. Its subcellular location is the early endosome membrane. It is found in the cell membrane. The protein localises to the recycling endosome membrane. The protein resides in the endoplasmic reticulum membrane. It localises to the nucleus. The catalysed reaction is ATP + H2O + closed Cl(-) channel = ADP + phosphate + open Cl(-) channel.. It carries out the reaction chloride(in) = chloride(out). It catalyses the reaction hydrogencarbonate(in) = hydrogencarbonate(out). The enzyme catalyses ATP + H2O = ADP + phosphate + H(+). Epithelial ion channel that plays an important role in the regulation of epithelial ion and water transport and fluid homeostasis. Mediates the transport of chloride ions across the cell membrane. Possesses an intrinsic ATPase activity and utilizes ATP to gate its channel; the passive flow of anions through the channel is gated by cycles of ATP binding and hydrolysis by the ATP-binding domains. The ion channel is also permeable to HCO(3)(-); selectivity depends on the extracellular chloride concentration. Exerts its function also by modulating the activity of other ion channels and transporters. Contributes to the regulation of the pH and the ion content of the epithelial fluid layer. Modulates the activity of the epithelial sodium channel (ENaC) complex, in part by regulating the cell surface expression of the ENaC complex. May regulate bicarbonate secretion and salvage in epithelial cells by regulating the transporter SLC4A7. Can inhibit the chloride channel activity of ANO1. Plays a role in the chloride and bicarbonate homeostasis during sperm epididymal maturation and capacitation. The protein is Cystic fibrosis transmembrane conductance regulator of Equus caballus (Horse).